The chain runs to 421 residues: Glucan 1,3-beta-glucosidase (421 aa).

The signal sequence occupies residues 1–15 (MKLTKLVALAGAALA). Residue Glu-213 is the Proton donor of the active site. 2 disulfide bridges follow: Cys-296–Cys-419 and Cys-321–Cys-347. Glu-313 (nucleophile) is an active-site residue.

This sequence belongs to the glycosyl hydrolase 5 (cellulase A) family.

It localises to the secreted. It catalyses the reaction Successive hydrolysis of beta-D-glucose units from the non-reducing ends of (1-&gt;3)-beta-D-glucans, releasing alpha-glucose.. This chain is Glucan 1,3-beta-glucosidase (EXG1), found in Yarrowia lipolytica (strain CLIB 122 / E 150) (Yeast).